We begin with the raw amino-acid sequence, 140 residues long: Ribosome-binding factor A (140 aa).

A disordered region spans residues 121–140; sequence KTEQTSADDDADRLDSEDRS.

Belongs to the RbfA family. Monomer. Binds 30S ribosomal subunits, but not 50S ribosomal subunits or 70S ribosomes.

It localises to the cytoplasm. Functionally, one of several proteins that assist in the late maturation steps of the functional core of the 30S ribosomal subunit. Associates with free 30S ribosomal subunits (but not with 30S subunits that are part of 70S ribosomes or polysomes). Required for efficient processing of 16S rRNA. May interact with the 5'-terminal helix region of 16S rRNA. The sequence is that of Ribosome-binding factor A from Psychrobacter sp. (strain PRwf-1).